An 84-amino-acid polypeptide reads, in one-letter code: DNA-directed RNA polymerase subunit Rpo5 (84 aa).

Belongs to the archaeal Rpo5/eukaryotic RPB5 RNA polymerase subunit family. Part of the RNA polymerase complex.

It localises to the cytoplasm. The enzyme catalyses RNA(n) + a ribonucleoside 5'-triphosphate = RNA(n+1) + diphosphate. Its function is as follows. DNA-dependent RNA polymerase (RNAP) catalyzes the transcription of DNA into RNA using the four ribonucleoside triphosphates as substrates. The sequence is that of DNA-directed RNA polymerase subunit Rpo5 from Saccharolobus islandicus (strain Y.N.15.51 / Yellowstone #2) (Sulfolobus islandicus).